A 379-amino-acid polypeptide reads, in one-letter code: MSKTRMEKLKTLKTIAETLNQGHDIKATLDEVLKELLSLTNLQSGWIFLIEEDGSYTLAADAYLPPALSRKEKVLMCEGECYCLTKFNNGGLRKAANIMNCKRIESAENLHCFDTEGITHHATVPLEDGDRRFGLLNVAAAGKTMFDEEELHLLESVAFQIGTAIQRMRLSEYQQKNALLMERNRLAQELHDSVNQMLFSVSLTAKAAKTLTKDENLQQMIDFIQNLSQDALAEMKALIWQLRPGGLEKGLAEAIKSYGALIGLKIIFTQKGCPVLTDEQEHMLWRVVQEALNNCKKHAGTDTAYVSLTASLCHAELDIIDHGAGFRYEAHAGLPSLGIKGMKERAEKAGAKFWIESALGTGTKLSIRLPLKSRKGGAV.

The Histidine kinase domain occupies 185–373; sequence RLAQELHDSV…KLSIRLPLKS (189 aa). H191 carries the post-translational modification Phosphohistidine; by autocatalysis.

The catalysed reaction is ATP + protein L-histidine = ADP + protein N-phospho-L-histidine.. Functionally, member of the two-component regulatory system YhcY/YhcZ. Probably activates YhcZ by phosphorylation. This chain is Sensor histidine kinase YhcY (yhcY), found in Bacillus subtilis (strain 168).